A 736-amino-acid polypeptide reads, in one-letter code: Elongation factor 2 (736 aa).

The tr-type G domain maps to 19-262 (DQIRNIGIIA…MVIKFVPNPR (244 aa)). GTP is bound by residues 28–35 (AHVDHGKT), 94–98 (DTPGH), and 148–151 (NKVD). Residue histidine 602 is modified to Diphthamide.

This sequence belongs to the TRAFAC class translation factor GTPase superfamily. Classic translation factor GTPase family. EF-G/EF-2 subfamily.

The protein localises to the cytoplasm. Its function is as follows. Catalyzes the GTP-dependent ribosomal translocation step during translation elongation. During this step, the ribosome changes from the pre-translocational (PRE) to the post-translocational (POST) state as the newly formed A-site-bound peptidyl-tRNA and P-site-bound deacylated tRNA move to the P and E sites, respectively. Catalyzes the coordinated movement of the two tRNA molecules, the mRNA and conformational changes in the ribosome. In Aeropyrum pernix (strain ATCC 700893 / DSM 11879 / JCM 9820 / NBRC 100138 / K1), this protein is Elongation factor 2 (fusA).